Consider the following 469-residue polypeptide: Aspartyl/glutamyl-tRNA(Asn/Gln) amidotransferase subunit B (469 aa).

The protein belongs to the GatB/GatE family. GatB subfamily. In terms of assembly, heterotrimer of A, B and C subunits.

The catalysed reaction is L-glutamyl-tRNA(Gln) + L-glutamine + ATP + H2O = L-glutaminyl-tRNA(Gln) + L-glutamate + ADP + phosphate + H(+). It carries out the reaction L-aspartyl-tRNA(Asn) + L-glutamine + ATP + H2O = L-asparaginyl-tRNA(Asn) + L-glutamate + ADP + phosphate + 2 H(+). Functionally, allows the formation of correctly charged Asn-tRNA(Asn) or Gln-tRNA(Gln) through the transamidation of misacylated Asp-tRNA(Asn) or Glu-tRNA(Gln) in organisms which lack either or both of asparaginyl-tRNA or glutaminyl-tRNA synthetases. The reaction takes place in the presence of glutamine and ATP through an activated phospho-Asp-tRNA(Asn) or phospho-Glu-tRNA(Gln). This chain is Aspartyl/glutamyl-tRNA(Asn/Gln) amidotransferase subunit B, found in Thermus thermophilus (strain ATCC BAA-163 / DSM 7039 / HB27).